Reading from the N-terminus, the 112-residue chain is Large ribosomal subunit protein eL30z (112 aa).

This sequence belongs to the eukaryotic ribosomal protein eL30 family.

This Arabidopsis thaliana (Mouse-ear cress) protein is Large ribosomal subunit protein eL30z (RPL30A).